The following is a 497-amino-acid chain: Cytochrome P450 2D6 (497 aa).

D301 serves as a coordination point for substrate. C443 is a heme binding site.

It belongs to the cytochrome P450 family. Heme is required as a cofactor.

Its subcellular location is the endoplasmic reticulum membrane. It is found in the microsome membrane. It catalyses the reaction (5Z,8Z,11Z,14Z)-eicosatetraenoate + reduced [NADPH--hemoprotein reductase] + O2 = (8R,9S)-epoxy-(5Z,11Z,14Z)-eicosatrienoate + oxidized [NADPH--hemoprotein reductase] + H2O + H(+). The enzyme catalyses (5Z,8Z,11Z,14Z)-eicosatetraenoate + reduced [NADPH--hemoprotein reductase] + O2 = (11R,12S)-epoxy-(5Z,8Z,14Z)-eicosatrienoate + oxidized [NADPH--hemoprotein reductase] + H2O + H(+). It carries out the reaction (5Z,8Z,11Z,14Z)-eicosatetraenoate + reduced [NADPH--hemoprotein reductase] + O2 = (14S,15R)-epoxy-(5Z,8Z,11Z)-eicosatrienoate + oxidized [NADPH--hemoprotein reductase] + H2O + H(+). The catalysed reaction is N-(5Z,8Z,11Z,14Z-eicosatetraenoyl)-ethanolamine + reduced [NADPH--hemoprotein reductase] + O2 = N-(8,9-epoxy-5Z,11Z,14Z-eicosatrienoyl)-ethanolamine + oxidized [NADPH--hemoprotein reductase] + H2O + H(+). It catalyses the reaction N-(5Z,8Z,11Z,14Z-eicosatetraenoyl)-ethanolamine + reduced [NADPH--hemoprotein reductase] + O2 = N-(11,12-epoxy-5Z,8Z,14Z-eicosatrienoyl)-ethanolamine + oxidized [NADPH--hemoprotein reductase] + H2O + H(+). The enzyme catalyses N-(5Z,8Z,11Z,14Z-eicosatetraenoyl)-ethanolamine + reduced [NADPH--hemoprotein reductase] + O2 = N-(14,15-epoxy-5Z,8Z,11Z-eicosatrienoyl)-ethanolamine + oxidized [NADPH--hemoprotein reductase] + H2O + H(+). It carries out the reaction N-(5Z,8Z,11Z,14Z-eicosatetraenoyl)-ethanolamine + reduced [NADPH--hemoprotein reductase] + O2 = N-(20-hydroxy-5Z,8Z,11Z,14Z-eicosatetraenoyl)-ethanolamine + oxidized [NADPH--hemoprotein reductase] + H2O + H(+). The catalysed reaction is (5Z,8Z,11Z,14Z,17Z)-eicosapentaenoate + reduced [NADPH--hemoprotein reductase] + O2 = (17S,18R)-epoxy-(5Z,8Z,11Z,14Z)-eicosatetraenoate + oxidized [NADPH--hemoprotein reductase] + H2O + H(+). It catalyses the reaction (4Z,7Z,10Z,13Z,16Z,19Z)-docosahexaenoate + reduced [NADPH--hemoprotein reductase] + O2 = (19R,20S)-epoxy-(4Z,7Z,10Z,13Z,16Z)-docosapentaenoate + oxidized [NADPH--hemoprotein reductase] + H2O + H(+). The enzyme catalyses (4Z,7Z,10Z,13Z,16Z,19Z)-docosahexaenoate + reduced [NADPH--hemoprotein reductase] + O2 = (19S,20R)-epoxy-(4Z,7Z,10Z,13Z,16Z)-docosapentaenoate + oxidized [NADPH--hemoprotein reductase] + H2O + H(+). It carries out the reaction cholesterol + reduced [NADPH--hemoprotein reductase] + O2 = 25-hydroxycholesterol + oxidized [NADPH--hemoprotein reductase] + H2O + H(+). The catalysed reaction is all-trans-retinol + reduced [NADPH--hemoprotein reductase] + O2 = all-trans-retinal + oxidized [NADPH--hemoprotein reductase] + 2 H2O + H(+). It participates in cofactor metabolism; retinol metabolism. Its pathway is lipid metabolism; fatty acid metabolism. The protein operates within steroid metabolism; cholesterol metabolism. A cytochrome P450 monooxygenase involved in the metabolism of fatty acids, steroids and retinoids. Mechanistically, uses molecular oxygen inserting one oxygen atom into a substrate, and reducing the second into a water molecule, with two electrons provided by NADPH via cytochrome P450 reductase (NADPH--hemoprotein reductase). Catalyzes the epoxidation of double bonds of polyunsaturated fatty acids (PUFA). Metabolizes endocannabinoid arachidonoylethanolamide (anandamide) to 20-hydroxyeicosatetraenoic acid ethanolamide (20-HETE-EA) and 8,9-, 11,12-, and 14,15-epoxyeicosatrienoic acid ethanolamides (EpETrE-EAs), potentially modulating endocannabinoid system signaling. Catalyzes the hydroxylation of carbon-hydrogen bonds. Metabolizes cholesterol toward 25-hydroxycholesterol, a physiological regulator of cellular cholesterol homeostasis. Catalyzes the oxidative transformations of all-trans retinol to all-trans retinal, a precursor for the active form all-trans-retinoic acid. Also involved in the oxidative metabolism of drugs such as antiarrhythmics, adrenoceptor antagonists, and tricyclic antidepressants. The polypeptide is Cytochrome P450 2D6 (CYP2D6) (Pan paniscus (Pygmy chimpanzee)).